The chain runs to 269 residues: GTP cyclohydrolase FolE2 (269 aa).

This sequence belongs to the GTP cyclohydrolase IV family.

The catalysed reaction is GTP + H2O = 7,8-dihydroneopterin 3'-triphosphate + formate + H(+). The protein operates within cofactor biosynthesis; 7,8-dihydroneopterin triphosphate biosynthesis; 7,8-dihydroneopterin triphosphate from GTP: step 1/1. Converts GTP to 7,8-dihydroneopterin triphosphate. The sequence is that of GTP cyclohydrolase FolE2 from Burkholderia ambifaria (strain ATCC BAA-244 / DSM 16087 / CCUG 44356 / LMG 19182 / AMMD) (Burkholderia cepacia (strain AMMD)).